The following is a 264-amino-acid chain: Small ribosomal subunit protein eS1 (264 aa).

N6-acetyllysine; alternate is present on Lys34. Lys34 participates in a covalent cross-link: Glycyl lysine isopeptide (Lys-Gly) (interchain with G-Cter in SUMO2); alternate. Residue Lys56 is modified to N6-acetyllysine. Tyr155 carries the post-translational modification ADP-ribosyltyrosine. Positions 232–264 are disordered; that stretch reads HGEGSSSGKATGDETGAKVERADGYEPPVQESV. Ser236 and Ser237 each carry phosphoserine. Positions 242-255 are enriched in basic and acidic residues; the sequence is TGDETGAKVERADG. An N6-acetyllysine; alternate modification is found at Lys249. A Glycyl lysine isopeptide (Lys-Gly) (interchain with G-Cter in SUMO2); alternate cross-link involves residue Lys249. The residue at position 256 (Tyr256) is a Phosphotyrosine. Residue Ser263 is modified to Phosphoserine.

The protein belongs to the eukaryotic ribosomal protein eS1 family. Component of the small ribosomal subunit. Mature ribosomes consist of a small (40S) and a large (60S) subunit. The 40S subunit contains about 33 different proteins and 1 molecule of RNA (18S). The 60S subunit contains about 49 different proteins and 3 molecules of RNA (28S, 5.8S and 5S). Identified in a IGF2BP1-dependent mRNP granule complex containing untranslated mRNAs. Binds with high affinity to IPO4. Interacts with DDIT3. Part of the small subunit (SSU) processome, composed of more than 70 proteins and the RNA chaperone small nucleolar RNA (snoRNA) U3. ADP-ribosylated at Tyr-155 by PARP1 in presence of HPF1.

The protein localises to the cytoplasm. It is found in the nucleus. The protein resides in the nucleolus. Its function is as follows. Component of the small ribosomal subunit. The ribosome is a large ribonucleoprotein complex responsible for the synthesis of proteins in the cell. Part of the small subunit (SSU) processome, first precursor of the small eukaryotic ribosomal subunit. During the assembly of the SSU processome in the nucleolus, many ribosome biogenesis factors, an RNA chaperone and ribosomal proteins associate with the nascent pre-rRNA and work in concert to generate RNA folding, modifications, rearrangements and cleavage as well as targeted degradation of pre-ribosomal RNA by the RNA exosome. May play a role during erythropoiesis through regulation of transcription factor DDIT3. The polypeptide is Small ribosomal subunit protein eS1 (Macaca fascicularis (Crab-eating macaque)).